Here is a 548-residue protein sequence, read N- to C-terminus: 2-succinyl-5-enolpyruvyl-6-hydroxy-3-cyclohexene-1-carboxylate synthase (548 aa).

The protein belongs to the TPP enzyme family. MenD subfamily. Homodimer. It depends on Mg(2+) as a cofactor. Mn(2+) is required as a cofactor. The cofactor is thiamine diphosphate.

It carries out the reaction isochorismate + 2-oxoglutarate + H(+) = 5-enolpyruvoyl-6-hydroxy-2-succinyl-cyclohex-3-ene-1-carboxylate + CO2. Its pathway is quinol/quinone metabolism; 1,4-dihydroxy-2-naphthoate biosynthesis; 1,4-dihydroxy-2-naphthoate from chorismate: step 2/7. It functions in the pathway quinol/quinone metabolism; menaquinone biosynthesis. Functionally, catalyzes the thiamine diphosphate-dependent decarboxylation of 2-oxoglutarate and the subsequent addition of the resulting succinic semialdehyde-thiamine pyrophosphate anion to isochorismate to yield 2-succinyl-5-enolpyruvyl-6-hydroxy-3-cyclohexene-1-carboxylate (SEPHCHC). The chain is 2-succinyl-5-enolpyruvyl-6-hydroxy-3-cyclohexene-1-carboxylate synthase from Mycobacterium marinum (strain ATCC BAA-535 / M).